We begin with the raw amino-acid sequence, 177 residues long: Cytochrome c-type biogenesis protein CcmE (177 aa).

The Cytoplasmic portion of the chain corresponds to 1-7; sequence MTRKSRR. The helical; Signal-anchor for type II membrane protein transmembrane segment at 8–28 threads the bilayer; it reads LILIAACGAVLALALGLILSA. Residues 29 to 177 lie on the Periplasmic side of the membrane; sequence MSGSIVFFRS…DATLGQRSER (149 aa). Heme-binding residues include histidine 122 and tyrosine 126. The disordered stretch occupies residues 133–177; it reads DALKAQGRWQEGGSKEAPKDASKAAPKDAAKPETADATLGQRSER. Residues 145 to 166 are compositionally biased toward basic and acidic residues; the sequence is GSKEAPKDASKAAPKDAAKPET.

It belongs to the CcmE/CycJ family.

The protein localises to the cell inner membrane. Heme chaperone required for the biogenesis of c-type cytochromes. Transiently binds heme delivered by CcmC and transfers the heme to apo-cytochromes in a process facilitated by CcmF and CcmH. The sequence is that of Cytochrome c-type biogenesis protein CcmE from Methylorubrum extorquens (strain PA1) (Methylobacterium extorquens).